The following is a 312-amino-acid chain: Ribosomal protein L11 methyltransferase (312 aa).

The S-adenosyl-L-methionine site is built by Thr-164, Gly-185, Asp-207, and Asn-249.

Belongs to the methyltransferase superfamily. PrmA family.

Its subcellular location is the cytoplasm. It catalyses the reaction L-lysyl-[protein] + 3 S-adenosyl-L-methionine = N(6),N(6),N(6)-trimethyl-L-lysyl-[protein] + 3 S-adenosyl-L-homocysteine + 3 H(+). In terms of biological role, methylates ribosomal protein L11. In Clostridium novyi (strain NT), this protein is Ribosomal protein L11 methyltransferase.